The chain runs to 130 residues: Glycine cleavage system H protein (130 aa).

The 82-residue stretch at 25–106 (MALIGISDFA…PFDSWMIKVK (82 aa)) folds into the Lipoyl-binding domain. Position 66 is an N6-lipoyllysine (Lys66).

It belongs to the GcvH family. As to quaternary structure, the glycine cleavage system is composed of four proteins: P, T, L and H. It depends on (R)-lipoate as a cofactor.

Its function is as follows. The glycine cleavage system catalyzes the degradation of glycine. The H protein shuttles the methylamine group of glycine from the P protein to the T protein. The protein is Glycine cleavage system H protein of Leptospira interrogans serogroup Icterohaemorrhagiae serovar copenhageni (strain Fiocruz L1-130).